The primary structure comprises 65 residues: UPF0434 protein BH12860 (65 aa).

This sequence belongs to the UPF0434 family.

The polypeptide is UPF0434 protein BH12860 (Bartonella henselae (strain ATCC 49882 / DSM 28221 / CCUG 30454 / Houston 1) (Rochalimaea henselae)).